The chain runs to 395 residues: NAD(P)H-quinone oxidoreductase subunit H, chloroplastic (395 aa).

Belongs to the complex I 49 kDa subunit family. NDH is composed of at least 16 different subunits, 5 of which are encoded in the nucleus.

Its subcellular location is the plastid. It localises to the chloroplast thylakoid membrane. It carries out the reaction a plastoquinone + NADH + (n+1) H(+)(in) = a plastoquinol + NAD(+) + n H(+)(out). The catalysed reaction is a plastoquinone + NADPH + (n+1) H(+)(in) = a plastoquinol + NADP(+) + n H(+)(out). Its function is as follows. NDH shuttles electrons from NAD(P)H:plastoquinone, via FMN and iron-sulfur (Fe-S) centers, to quinones in the photosynthetic chain and possibly in a chloroplast respiratory chain. The immediate electron acceptor for the enzyme in this species is believed to be plastoquinone. Couples the redox reaction to proton translocation, and thus conserves the redox energy in a proton gradient. In Coffea arabica (Arabian coffee), this protein is NAD(P)H-quinone oxidoreductase subunit H, chloroplastic.